Here is a 195-residue protein sequence, read N- to C-terminus: Glycerol-3-phosphate acyltransferase (195 aa).

Helical transmembrane passes span 2–22 (IFFSILITIFAYFLGSISSAI), 54–74 (IAISVILFDILKGAIPMWLGY), 80–100 (PIFLGATAVFSCLGHMYPIFF), 107–127 (GVATAFGVLTTIDLHLSIVMI), 132–152 (LTVLSFGYSSLGAIVTAFIIP), and 155–175 (AWHFQSQYLLPTIIISSLVVI).

Belongs to the PlsY family. Probably interacts with PlsX.

It is found in the cell inner membrane. The enzyme catalyses an acyl phosphate + sn-glycerol 3-phosphate = a 1-acyl-sn-glycero-3-phosphate + phosphate. It functions in the pathway lipid metabolism; phospholipid metabolism. Its function is as follows. Catalyzes the transfer of an acyl group from acyl-phosphate (acyl-PO(4)) to glycerol-3-phosphate (G3P) to form lysophosphatidic acid (LPA). This enzyme utilizes acyl-phosphate as fatty acyl donor, but not acyl-CoA or acyl-ACP. The polypeptide is Glycerol-3-phosphate acyltransferase (Blochmanniella pennsylvanica (strain BPEN)).